Here is a 203-residue protein sequence, read N- to C-terminus: FMN-dependent NADH:quinone oxidoreductase (203 aa).

143–146 (SNGG) contacts FMN.

Belongs to the azoreductase type 1 family. In terms of assembly, homodimer. FMN serves as cofactor.

The enzyme catalyses 2 a quinone + NADH + H(+) = 2 a 1,4-benzosemiquinone + NAD(+). It carries out the reaction N,N-dimethyl-1,4-phenylenediamine + anthranilate + 2 NAD(+) = 2-(4-dimethylaminophenyl)diazenylbenzoate + 2 NADH + 2 H(+). Its function is as follows. Quinone reductase that provides resistance to thiol-specific stress caused by electrophilic quinones. In terms of biological role, also exhibits azoreductase activity. Catalyzes the reductive cleavage of the azo bond in aromatic azo compounds to the corresponding amines. The sequence is that of FMN-dependent NADH:quinone oxidoreductase from Streptococcus suis (strain 98HAH33).